We begin with the raw amino-acid sequence, 375 residues long: Leucoanthocyanidin dioxygenase 1 (375 aa).

The Fe2OG dioxygenase domain occupies 218–317 (LLLQLKINYY…RLSWVVFCEP (100 aa)). Fe cation contacts are provided by His-242, Asp-244, and His-298. Arg-308 contacts 2-oxoglutarate.

The protein belongs to the iron/ascorbate-dependent oxidoreductase family. L-ascorbate is required as a cofactor. The cofactor is Fe(2+).

It carries out the reaction a (2R,3S,4S)-leucoanthocyanidin + 2-oxoglutarate + O2 = a 4-H-anthocyanidin with a 3-hydroxy group + succinate + CO2 + 2 H2O. Its pathway is pigment biosynthesis; anthocyanin biosynthesis. Functionally, involved in anthocyanin and protoanthocyanidin biosynthesis by catalyzing the oxidation of leucoanthocyanidins into anthocyanidins. This chain is Leucoanthocyanidin dioxygenase 1, found in Oryza sativa subsp. japonica (Rice).